Reading from the N-terminus, the 465-residue chain is Respiratory transcription factor ZNF1 (465 aa).

A DNA-binding region (zn(2)-C6 fungal-type) is located at residues 8 to 34 (CDCCCIRRVKCDRKKPCKCCLQHNLQC).

It belongs to the MAL13 family.

It is found in the nucleus. Transcription factor that regulates respiratory growth and plays a critical role in stress adaptation during non-fermentative growth. Binds to promoters of genes involved in non-fermentative metabolism, including processes such as gluconeogenesis (PCK1, FBP1 and MDH2), glyoxylate shunt (MLS1 and ICL1) and the tricarboxylic acid cycle (ACO1). Plays a role in maintaining mitochondrial morphology and function. Also plays a role in tolerance to pH and osmotic stress, especially during the oxidative metabolism. This chain is Respiratory transcription factor ZNF1, found in Saccharomyces cerevisiae (strain ATCC 204508 / S288c) (Baker's yeast).